The sequence spans 330 residues: Laforin (330 aa).

A CBM20 domain is found at Met1–Leu123. Position 25 is a phosphoserine; by AMPK (Ser25). Residues Trp32, Lys86, Gly102–Asp106, Asp196, Asp234, and Arg240 each bind substrate. A Tyrosine-protein phosphatase domain is found at His155 to Lys322. Cys265 serves as the catalytic Phosphocysteine intermediate. Positions Cys265–Arg271 match the Glucan phosphatase signature motif CXAGXGR motif. Substrate is bound by residues Asn266–Arg271 and Tyr303.

It belongs to the protein-tyrosine phosphatase family. As to quaternary structure, homodimer. Interacts with PPP1R3B, PPP1R3C, HIRIP5, and EPM2AIP1. Binds glycogen and Lafora bodies. Interacts with NHLRC1/malin (via the NHL repeats). Forms a complex with NHLRC1/malin and HSP70. Interacts with PPP1R3D; in the presence of NHLC1/malin the interaction leads to ubiquitination and autophagic degradation of PPP1R3D. Interacts (via the phosphatase domain) with MAPT/Tau; the interaction dephosphorylates MAPT. Interacts with PRDM8. In terms of processing, polyubiquitinated by NHLRC1/malin. Phosphorylation on Ser-25 by AMPK affects the phosphatase activity of the enzyme and its ability to homodimerize and interact with NHLRC1, PPP1R3C or PRKAA2. As to expression, detected in skeletal muscle and in brain (at protein level). Widely expressed. Higher levels of expression are found in heart, brain, liver, skeletal muscle and kidney.

Its subcellular location is the cytoplasm. The protein resides in the endoplasmic reticulum membrane. It is found in the cell membrane. It carries out the reaction O-phospho-L-tyrosyl-[protein] + H2O = L-tyrosyl-[protein] + phosphate. The catalysed reaction is O-phospho-L-seryl-[protein] + H2O = L-seryl-[protein] + phosphate. It catalyses the reaction O-phospho-L-threonyl-[protein] + H2O = L-threonyl-[protein] + phosphate. In terms of biological role, plays an important role in preventing glycogen hyperphosphorylation and the formation of insoluble aggregates, via its activity as glycogen phosphatase, and by promoting the ubiquitination of proteins involved in glycogen metabolism via its interaction with the E3 ubiquitin ligase NHLRC1/malin. Dephosphorylates phosphotyrosine and synthetic substrates, such as para-nitrophenylphosphate (pNPP), and has low activity with phosphoserine and phosphothreonine substrates (in vitro). Has also been shown to dephosphorylate MAPT. Shows strong phosphatase activity towards complex carbohydrates in vitro, avoiding glycogen hyperphosphorylation which is associated with reduced branching and formation of insoluble aggregates. Forms a complex with NHLRC1/malin and HSP70, which suppresses the cellular toxicity of misfolded proteins by promoting their degradation through the ubiquitin-proteasome system (UPS). Acts as a scaffold protein to facilitate PPP1R3C/PTG ubiquitination by NHLRC1/malin. Also promotes proteasome-independent protein degradation through the macroautophagy pathway. This chain is Laforin (Epm2a), found in Mus musculus (Mouse).